The primary structure comprises 305 residues: Calponin-2 (305 aa).

Serine 2 is subject to N-acetylserine. Residues lysine 8 and lysine 25 each carry the N6-acetyllysine modification. The Calponin-homology (CH) domain maps to 28-132 (PQKEAELRSW…SLLALAGKAK (105 aa)). Phosphoserine is present on serine 138. Calponin-like repeat units follow at residues 166–191 (IGLQ…RHLY), 206–231 (ISLQ…RHIY), and 245–269 (MSLQ…RQIY).

Belongs to the calponin family. Smooth muscle, and tissues containing significant amounts of smooth muscle.

Its function is as follows. Thin filament-associated protein that is implicated in the regulation and modulation of smooth muscle contraction. It is capable of binding to actin, calmodulin and tropomyosin. The interaction of calponin with actin inhibits the actomyosin Mg-ATPase activity. In Mus musculus (Mouse), this protein is Calponin-2 (Cnn2).